Consider the following 432-residue polypeptide: Trigger factor (432 aa).

In terms of domain architecture, PPIase FKBP-type spans 161–246 (EDRVTIDFTG…LKKVEERELP (86 aa)).

The protein belongs to the FKBP-type PPIase family. Tig subfamily.

The protein resides in the cytoplasm. It carries out the reaction [protein]-peptidylproline (omega=180) = [protein]-peptidylproline (omega=0). Functionally, involved in protein export. Acts as a chaperone by maintaining the newly synthesized protein in an open conformation. Functions as a peptidyl-prolyl cis-trans isomerase. This chain is Trigger factor, found in Klebsiella pneumoniae (strain 342).